Consider the following 246-residue polypeptide: O-antigen export system ATP-binding protein RfbB (246 aa).

In terms of domain architecture, ABC transporter spans Ser22–Ala246. Gly63–Ser70 contributes to the ATP binding site.

This sequence belongs to the ABC transporter superfamily.

It is found in the cell inner membrane. Functionally, may form an ATP-driven O-antigen export apparatus, in association with RfbA. This chain is O-antigen export system ATP-binding protein RfbB (rfbB), found in Klebsiella pneumoniae.